The chain runs to 180 residues: Ribulose bisphosphate carboxylase small subunit, chloroplastic (180 aa).

The N-terminal 57 residues, 1–57 (MASVVASAAVVTPFAASAASTTKSSQIVSVQAGLKAGVFGGKSEWQTKTQTNGSRVS), are a transit peptide targeting the chloroplast.

This sequence belongs to the RuBisCO small chain family. In terms of assembly, heterohexadecamer of 8 large and 8 small subunits.

The protein resides in the plastid. It is found in the chloroplast. RuBisCO catalyzes two reactions: the carboxylation of D-ribulose 1,5-bisphosphate, the primary event in carbon dioxide fixation, as well as the oxidative fragmentation of the pentose substrate. Both reactions occur simultaneously and in competition at the same active site. Although the small subunit is not catalytic it is essential for maximal activity. The sequence is that of Ribulose bisphosphate carboxylase small subunit, chloroplastic from Marchantia paleacea (Liverwort).